The primary structure comprises 227 residues: ATP synthase subunit a (227 aa).

Transmembrane regions (helical) follow at residues 16–36 (AFVYAFHFCLVALIILIVAYI), 79–99 (LVATIGFIVFFSNVIGIIPGF), 105–125 (SLNLTLVLALVVFIYYNFEGI), 176–196 (LFLLAMLTLAPWFAPLPAFAL), and 202–222 (VLQTFIFMMLTYVYLAGAVAI).

This sequence belongs to the ATPase A chain family. F-type ATPases have 2 components, CF(1) - the catalytic core - and CF(0) - the membrane proton channel. CF(1) has five subunits: alpha(3), beta(3), gamma(1), delta(1), epsilon(1). CF(0) has three main subunits: a(1), b(2) and c(9-12). The alpha and beta chains form an alternating ring which encloses part of the gamma chain. CF(1) is attached to CF(0) by a central stalk formed by the gamma and epsilon chains, while a peripheral stalk is formed by the delta and b chains.

It localises to the cell inner membrane. In terms of biological role, key component of the proton channel; it plays a direct role in the translocation of protons across the membrane. This Campylobacter concisus (strain 13826) protein is ATP synthase subunit a.